Reading from the N-terminus, the 83-residue chain is Defensin-2 (83 aa).

A signal peptide spans 1–33 (MAGKGVGTPLSALFLLVLLVVTIGMMEVQVAEG). Cystine bridges form between cysteine 36–cysteine 82, cysteine 47–cysteine 67, cysteine 53–cysteine 76, and cysteine 57–cysteine 78.

This sequence belongs to the DEFL family.

The protein resides in the secreted. In terms of biological role, plant defense peptide. Has antifungal activity. In Pinus sylvestris (Scotch pine), this protein is Defensin-2.